The following is a 231-amino-acid chain: 2,3-bisphosphoglycerate-dependent phosphoglycerate mutase (231 aa).

Residues 8–15, 21–22, Arg60, 87–90, Lys98, 114–115, and 183–184 contribute to the substrate site; these read RHGESEWN, TG, ERHY, RR, and GN. Catalysis depends on His9, which acts as the Tele-phosphohistidine intermediate. Glu87 (proton donor/acceptor) is an active-site residue.

This sequence belongs to the phosphoglycerate mutase family. BPG-dependent PGAM subfamily.

The enzyme catalyses (2R)-2-phosphoglycerate = (2R)-3-phosphoglycerate. Its pathway is carbohydrate degradation; glycolysis; pyruvate from D-glyceraldehyde 3-phosphate: step 3/5. In terms of biological role, catalyzes the interconversion of 2-phosphoglycerate and 3-phosphoglycerate. The polypeptide is 2,3-bisphosphoglycerate-dependent phosphoglycerate mutase (Streptococcus pyogenes serotype M49 (strain NZ131)).